The sequence spans 417 residues: Serine hydroxymethyltransferase (417 aa).

Residues leucine 121 and 125-127 (GHL) each bind (6S)-5,6,7,8-tetrahydrofolate. Residue lysine 229 is modified to N6-(pyridoxal phosphate)lysine. 355-357 (SPF) serves as a coordination point for (6S)-5,6,7,8-tetrahydrofolate.

It belongs to the SHMT family. In terms of assembly, homodimer. The cofactor is pyridoxal 5'-phosphate.

It localises to the cytoplasm. It carries out the reaction (6R)-5,10-methylene-5,6,7,8-tetrahydrofolate + glycine + H2O = (6S)-5,6,7,8-tetrahydrofolate + L-serine. Its pathway is one-carbon metabolism; tetrahydrofolate interconversion. It functions in the pathway amino-acid biosynthesis; glycine biosynthesis; glycine from L-serine: step 1/1. Its function is as follows. Catalyzes the reversible interconversion of serine and glycine with tetrahydrofolate (THF) serving as the one-carbon carrier. This reaction serves as the major source of one-carbon groups required for the biosynthesis of purines, thymidylate, methionine, and other important biomolecules. Also exhibits THF-independent aldolase activity toward beta-hydroxyamino acids, producing glycine and aldehydes, via a retro-aldol mechanism. This is Serine hydroxymethyltransferase from Shewanella baltica (strain OS223).